The following is a 660-amino-acid chain: tRNA 5-methylaminomethyl-2-thiouridine biosynthesis bifunctional protein MnmC (660 aa).

Residues 1–235 are tRNA (mnm(5)s(2)U34)-methyltransferase; sequence MTITRHARID…KWEVLRGAFI (235 aa). The FAD-dependent cmnm(5)s(2)U34 oxidoreductase stretch occupies residues 266 to 660; sequence IGAGLAGCAT…LRGLIRGGGK (395 aa).

In the N-terminal section; belongs to the methyltransferase superfamily. tRNA (mnm(5)s(2)U34)-methyltransferase family. This sequence in the C-terminal section; belongs to the DAO family. It depends on FAD as a cofactor.

It is found in the cytoplasm. It catalyses the reaction 5-aminomethyl-2-thiouridine(34) in tRNA + S-adenosyl-L-methionine = 5-methylaminomethyl-2-thiouridine(34) in tRNA + S-adenosyl-L-homocysteine + H(+). Catalyzes the last two steps in the biosynthesis of 5-methylaminomethyl-2-thiouridine (mnm(5)s(2)U) at the wobble position (U34) in tRNA. Catalyzes the FAD-dependent demodification of cmnm(5)s(2)U34 to nm(5)s(2)U34, followed by the transfer of a methyl group from S-adenosyl-L-methionine to nm(5)s(2)U34, to form mnm(5)s(2)U34. This chain is tRNA 5-methylaminomethyl-2-thiouridine biosynthesis bifunctional protein MnmC, found in Pseudomonas syringae pv. tomato (strain ATCC BAA-871 / DC3000).